A 231-amino-acid polypeptide reads, in one-letter code: Ion-translocating oxidoreductase complex subunit E (231 aa).

6 helical membrane-spanning segments follow: residues 18–38 (ALVQ…ATNA), 39–59 (LGLG…ISTL), 63–83 (TPAE…VSAV), 86–106 (LINA…PLIV), 125–145 (ALSA…MCVL), and 182–202 (PFLL…MLAG).

The protein belongs to the NqrDE/RnfAE family. As to quaternary structure, the complex is composed of six subunits: RsxA, RsxB, RsxC, RsxD, RsxE and RsxG.

The protein resides in the cell inner membrane. In terms of biological role, part of a membrane-bound complex that couples electron transfer with translocation of ions across the membrane. Required to maintain the reduced state of SoxR. In Escherichia coli (strain SMS-3-5 / SECEC), this protein is Ion-translocating oxidoreductase complex subunit E.